A 160-amino-acid chain; its full sequence is Transcription factor 12 (160 aa).

The segment at 1-58 (NKEKDENLHEPPSSDDMKSDDESSQKDIKVSSRGRTSTNEDEDLNPEQKIEREKERRM) is disordered. The span at 15-30 (DDMKSDDESSQKDIKV) shows a compositional bias: basic and acidic residues. Serine 19 carries the phosphoserine modification. Lysine 29 is covalently cross-linked (Glycyl lysine isopeptide (Lys-Gly) (interchain with G-Cter in SUMO2)). The residue at position 36 (threonine 36) is a Phosphothreonine. A Phosphoserine modification is found at serine 37. Residues 46 to 58 (PEQKIEREKERRM) show a composition bias toward basic and acidic residues. The 54-residue stretch at 55–108 (ERRMANNARERLRVRDINEAFKELGRMCQLHLKSEKPQTKLLILHQAVAVILSL) folds into the bHLH domain. Residues lysine 87 and lysine 131 each participate in a glycyl lysine isopeptide (Lys-Gly) (interchain with G-Cter in SUMO2) cross-link. The class A specific domain stretch occupies residues 110-133 (QQVRERNLNPKAACLKRREEEKVS). Residues 132–160 (VSVVSAEPPTTLPGTHPGLSETTNPMGHM) are disordered. Residues 139–150 (PPTTLPGTHPGL) are compositionally biased toward low complexity. The span at 151-160 (SETTNPMGHM) shows a compositional bias: polar residues.

Efficient DNA binding requires dimerization with another bHLH protein. Forms homo- or heterooligomers with myogenin, E12 and ITF2 proteins. Interacts with PTF1A. Interacts with RUNX1T1. Interacts with NEUROD2. Interacts with BHLHA9.

Its subcellular location is the nucleus. Functionally, transcriptional regulator. Involved in the initiation of neuronal differentiation. Activates transcription by binding to the E box (5'-CANNTG-3'). May be involved in the functional network that regulates the development of the GnRH axis. This Papio hamadryas (Hamadryas baboon) protein is Transcription factor 12 (TCF12).